The sequence spans 368 residues: tRNA-specific 2-thiouridylase MnmA (368 aa).

Residues 11–18 and Met-37 each bind ATP; that span reads GMSGGVDS. The interval 97-99 is interaction with target base in tRNA; the sequence is NPD. The active-site Nucleophile is the Cys-102. A disulfide bond links Cys-102 and Cys-199. Gly-127 serves as a coordination point for ATP. An interaction with tRNA region spans residues 149 to 151; it reads KDQ. Cys-199 functions as the Cysteine persulfide intermediate in the catalytic mechanism. An interaction with tRNA region spans residues 311–312; that stretch reads RY.

This sequence belongs to the MnmA/TRMU family. In terms of assembly, interacts with TusE.

The protein localises to the cytoplasm. The enzyme catalyses S-sulfanyl-L-cysteinyl-[protein] + uridine(34) in tRNA + AH2 + ATP = 2-thiouridine(34) in tRNA + L-cysteinyl-[protein] + A + AMP + diphosphate + H(+). In terms of biological role, catalyzes the 2-thiolation of uridine at the wobble position (U34) of tRNA(Lys), tRNA(Glu) and tRNA(Gln), leading to the formation of s(2)U34, the first step of tRNA-mnm(5)s(2)U34 synthesis. Sulfur is provided by IscS, via a sulfur-relay system. Binds ATP and its substrate tRNAs. This chain is tRNA-specific 2-thiouridylase MnmA, found in Salmonella choleraesuis (strain SC-B67).